We begin with the raw amino-acid sequence, 241 residues long: Glycerol-3-phosphate acyltransferase (241 aa).

Helical transmembrane passes span 3 to 23 (ILYSILINLALFLLGYLLLGS), 63 to 83 (IVFATDVLKTLLPILIISAIV), 97 to 117 (YISPQALGLGVVIGHIFPAYY), 131 to 151 (LIISINIILFLIAFLIFLLVV), 156 to 176 (IVSLGSITVAFSLLLFVWMPW), and 198 to 218 (LVNYWYVSPIIYTLCAFLVLV).

The protein belongs to the PlsY family. Probably interacts with PlsX.

Its subcellular location is the cell membrane. The enzyme catalyses an acyl phosphate + sn-glycerol 3-phosphate = a 1-acyl-sn-glycero-3-phosphate + phosphate. The protein operates within lipid metabolism; phospholipid metabolism. Its function is as follows. Catalyzes the transfer of an acyl group from acyl-phosphate (acyl-PO(4)) to glycerol-3-phosphate (G3P) to form lysophosphatidic acid (LPA). This enzyme utilizes acyl-phosphate as fatty acyl donor, but not acyl-CoA or acyl-ACP. In Mycoplasmopsis agalactiae (strain NCTC 10123 / CIP 59.7 / PG2) (Mycoplasma agalactiae), this protein is Glycerol-3-phosphate acyltransferase.